The chain runs to 347 residues: Guanine nucleotide-binding protein subunit beta (347 aa).

WD repeat units follow at residues 60 to 90, 102 to 132, 148 to 177, 189 to 219, 231 to 261, 275 to 305, and 317 to 347; these read GHLA…LVWD, LRSS…SIYN, SHTG…ILWD, DHNG…KLWD, GHEA…RLFD, NILC…NVWD, and GHGN…KIWA.

This sequence belongs to the WD repeat G protein beta family. G proteins are composed of 3 units, alpha, beta and gamma. Interacts with gpgA, and this requires phlp1.

Its subcellular location is the cytoplasm. The protein resides in the cell membrane. In terms of biological role, guanine nucleotide-binding proteins (G proteins) are involved as a modulator or transducer in various transmembrane signaling systems. The beta and gamma chains are required for the GTPase activity, for replacement of GDP by GTP, and for G protein-effector interaction. Required for normal chemotaxis in response to cAMP and for aggregation during scorocarp development. The polypeptide is Guanine nucleotide-binding protein subunit beta (gpbA) (Dictyostelium discoideum (Social amoeba)).